Consider the following 630-residue polypeptide: Telomere repeat-binding protein 5 (630 aa).

3 disordered regions span residues 1 to 38, 56 to 78, and 308 to 327; these read MVLQ…SENH, EGGN…CAVK, and YTAS…GSPR. A compositionally biased stretch (low complexity) spans 57–71; that stretch reads GGNSSSSSNNTSGNN. A compositionally biased stretch (polar residues) spans 309–325; the sequence is TASQSEETNKNEGQSGS. One can recognise a Ubiquitin-like domain in the interval 354 to 433; that stretch reads VKLGIKSFRV…SDTLGFCLEP (80 aa). Positions 463 to 489 are disordered; it reads LPSPGKHAKPSNSVESDLDSKPSAPNR. The 60-residue stretch at 523 to 582 folds into the HTH myb-type domain; that stretch reads AQRRIRRPFSVAEVEALVQAVERLGTGRWRDVKLRAFDNAKHRTYVDLKDKWKTLVHTAR. The segment at residues 551-578 is a DNA-binding region (H-T-H motif); the sequence is WRDVKLRAFDNAKHRTYVDLKDKWKTLV.

As to quaternary structure, homodimer. In terms of tissue distribution, expressed ubiquitously.

It is found in the nucleus. Binds specifically to the plant telomeric double-stranded DNA sequences. At least 6 repeats of telomeric sequences are required for binding. The protein is Telomere repeat-binding protein 5 (TRP5) of Arabidopsis thaliana (Mouse-ear cress).